A 290-amino-acid polypeptide reads, in one-letter code: ATP synthase gamma chain (290 aa).

Belongs to the ATPase gamma chain family. In terms of assembly, F-type ATPases have 2 components, CF(1) - the catalytic core - and CF(0) - the membrane proton channel. CF(1) has five subunits: alpha(3), beta(3), gamma(1), delta(1), epsilon(1). CF(0) has three main subunits: a, b and c.

The protein resides in the cell inner membrane. Functionally, produces ATP from ADP in the presence of a proton gradient across the membrane. The gamma chain is believed to be important in regulating ATPase activity and the flow of protons through the CF(0) complex. This chain is ATP synthase gamma chain, found in Erythrobacter litoralis (strain HTCC2594).